Here is a 74-residue protein sequence, read N- to C-terminus: ATP synthase subunit c (74 aa).

A run of 2 helical transmembrane segments spans residues 5-25 (LAYI…LGVG) and 49-69 (LFIG…VALL).

This sequence belongs to the ATPase C chain family. In terms of assembly, F-type ATPases have 2 components, F(1) - the catalytic core - and F(0) - the membrane proton channel. F(1) has five subunits: alpha(3), beta(3), gamma(1), delta(1), epsilon(1). F(0) has three main subunits: a(1), b(2) and c(10-14). The alpha and beta chains form an alternating ring which encloses part of the gamma chain. F(1) is attached to F(0) by a central stalk formed by the gamma and epsilon chains, while a peripheral stalk is formed by the delta and b chains.

It is found in the cell inner membrane. In terms of biological role, f(1)F(0) ATP synthase produces ATP from ADP in the presence of a proton or sodium gradient. F-type ATPases consist of two structural domains, F(1) containing the extramembraneous catalytic core and F(0) containing the membrane proton channel, linked together by a central stalk and a peripheral stalk. During catalysis, ATP synthesis in the catalytic domain of F(1) is coupled via a rotary mechanism of the central stalk subunits to proton translocation. Its function is as follows. Key component of the F(0) channel; it plays a direct role in translocation across the membrane. A homomeric c-ring of between 10-14 subunits forms the central stalk rotor element with the F(1) delta and epsilon subunits. The polypeptide is ATP synthase subunit c (Ruegeria sp. (strain TM1040) (Silicibacter sp.)).